Here is a 770-residue protein sequence, read N- to C-terminus: MSRKGPRAEVCADCSAPDPGWASISRGVLVCDECCSVHRSLGRHISIVKHLRHSAWPPTLLQMVHTLASNGANSIWEHSLLDPAQVQSGRRKANPQDKVHPIKSEFIRAKYQMLAFVHKLPCRDDDGVTAKDLSKQLHSSVRTGNLETCLRLLSLGAQANFFHPEKGTTPLHVAAKAGQTLQAELLVVYGADPGSPDVNGRTPIDYARQAGHHELAERLVECQYELTDRLAFYLCGRKPDHKNGHYIIPQMADRSRQKCMSQSLDLSELAKAAKKKLQALSNRLFEELAMDVYDEVDRRENDAVWLATQNHSTLVTERSAVPFLPVNPEYSATRNQGRQKLARFNAREFATLIIDILSEAKRRQQGKSLSSPTDNLELSARSQSELDDQHDYDSVASDEDTDQEPLPSAGATRNNRARSMDSSDLSDGAVTLQEYLELKKALATSEAKVQQLMKVNSSLSDELRRLQREIHKLQAENLQLRQPPGPVPPPSLPSERAEHTLMGPGGSTHRRDRQAFSMYEPGSALKPFGGTPGDELATRLQPFHSTELEDDAIYSVHVPAGLYRIRKGVSASSVPFTPSSPLLSCSQEGSRHASKLSRHGSGADSDYENTQSGDPLLGLEGKRFLELSKEDELHPELESLDGDLDPGLPSTEDVILKTEQVTKNIQELLRAAQEFKHDSFVPCSEKIHLAVTEMASLFPKRPALEPVRSSLRLLNASAYRLQSECRKTVPPEPGAPVDFQLLTQQVIQCAYDIAKAAKQLVTITTREKKQ.

One can recognise an Arf-GAP domain in the interval 1–124 (MSRKGPRAEV…AFVHKLPCRD (124 aa)). Positions 1-124 (MSRKGPRAEV…AFVHKLPCRD (124 aa)) are interaction with gamma-tubulin and localization to the centrosome. The C4-type zinc-finger motif lies at 11-34 (CADCSAPDPGWASISRGVLVCDEC). ANK repeat units lie at residues 132–161 (DLSK…QANF), 166–195 (KGTT…DPGS), and 199–228 (NGRT…ELTD). The residue at position 224 (Tyr224) is a Phosphotyrosine. An interaction with PCLO region spans residues 245–374 (HYIIPQMADR…QGKSLSSPTD (130 aa)). The segment at 253–424 (DRSRQKCMSQ…NRARSMDSSD (172 aa)) is interaction with PTK2/FAK1. The segment at 254-376 (RSRQKCMSQS…KSLSSPTDNL (123 aa)) is interaction with ARHGEF7. The tract at residues 363-425 (RQQGKSLSSP…RARSMDSSDL (63 aa)) is disordered. Positions 366–383 (GKSLSSPTDNLELSARSQ) are enriched in polar residues. Phosphoserine is present on residues Ser368 and Ser371. Phosphothreonine is present on Thr373. Residues 375–596 (NLELSARSQS…QEGSRHASKL (222 aa)) form an interaction with NCK2 and GRIN3A region. The interval 375–596 (NLELSARSQS…QEGSRHASKL (222 aa)) is required for localization at synapses. Phosphoserine occurs at positions 379 and 384. At Tyr392 the chain carries Phosphotyrosine. Ser394 and Ser397 each carry phosphoserine. A compositionally biased stretch (acidic residues) spans 394–403 (SVASDEDTDQ). Thr401 bears the Phosphothreonine mark. Residues Ser419, Ser422, and Ser426 each carry the phosphoserine modification. The segment at 420–475 (MDSSDLSDGAVTLQEYLELKKALATSEAKVQQLMKVNSSLSDELRRLQREIHKLQA) is interaction with MAPK1. Positions 429–629 (AVTLQEYLEL…EGKRFLELSK (201 aa)) are interaction with IKBKG. The stretch at 449-483 (VQQLMKVNSSLSDELRRLQREIHKLQAENLQLRQP) forms a coiled coil. Residues Ser507 and Ser545 each carry the phosphoserine modification. Thr546 carries the phosphothreonine modification. A phosphotyrosine mark is found at Tyr554 and Tyr563. Ser570, Ser580, Ser601, and Ser605 each carry phosphoserine. Over residues 578–588 (PSSPLLSCSQE) the composition is skewed to polar residues. The tract at residues 578–615 (PSSPLLSCSQEGSRHASKLSRHGSGADSDYENTQSGDP) is disordered. At Thr610 the chain carries Phosphothreonine. At Ser639 the chain carries Phosphoserine. Positions 646-770 (PGLPSTEDVI…VTITTREKKQ (125 aa)) are interaction with PXN and TGFB1I1.

In terms of assembly, forms homodimers and possibly oligomers. May forms heterooligomers with GIT2. Interacts with G protein-coupled receptor kinases, including GRK2, GRK3, GRK5 and GRK6. Interacts with PPFIA1, PPFIA2 and PPFIA4. Interacts with GRIP1 and forms a ternary complex with PPFIA1 and GRIP1. Directly interacts with ARHGEF7/beta-PIX, forming in vitro a heptameric complex made of a GIT1 dimer and an ARHGEF7 trimer. Directly interacts with PXN/paxillin; this interaction is enhanced in the presence of ARHGEF7. Directly interacts (via C-terminus) with TGFB1I1/Hic-5 (via LD motif 3). Directly interacts with PTK2/FAK1. May interact with PTK2B/PYK2; this interaction may be indirect. Interacts with AMPA receptors GRIA2/3. Directly interacts with protein Piccolo/PCLO. Forms a complex with Ephrin-B1/EFNB1 and NCK2/GRB4 (via SH2); this interaction is important for spine morphogenesis and synapse formation. Interaction with NCK2 is transient and depends upon GIT1 phosphorylation at Tyr-392. Interacts with GRIN3A/GluN3A (via C-terminus); this interaction competes with GIT1 interaction with ARHGEF7 and limits synaptic localization of GIT1. Interacts with IKBKG/NEMO in resting bone mesenchymal stem cells, as well as in TNF-stimulated cells; this interaction may increase IKBKG affinity for 'Lys-63'-linked polyubiquitin chains. Interacts with GABA(A) receptors, including GABRB3 and GABRG2. Interacts with SCRIB. Interacts (via N- and C-terminus) with ENTR1/SDCCAG3 (via N-terminus); this interaction is direct. May form a tripartite complex with ENTR1 and PTPN13. Interacts with YWHAZ. Interacts with PAK1. Interacts with PAK3. Directly interacts (via N-terminus) with gamma-tubulin. Interacts with MAPK1 and MAPK3; this interaction is required for MAPK1/3 recruitment to focal adhesions. Phosphorylated on tyrosine residues by PTK2/FAK1 and SRC in growing fibroblasts. Phosphorylation at Tyr-392 is induced by activation of Ephrin-B1/EFNB1 and catalyzed by SRC family kinases. It is required for the interaction with NCK2 and for GIT1 recruitment to synapses in hippocampal neurons. As to expression, expressed in the brain (at protein level). Also expressed at high levels in lung and heart. In lung, expressed in endothelial cells, especially in capillaries; also expressed in smooth muscle and epithelial cells of bronchi (at protein level). Expressed in bone marrow mesenchymal stem cells, as well as in osteoclasts and bone marrow-derived macrophages (at protein level).

It is found in the cytoplasm. The protein localises to the presynapse. It localises to the postsynapse. Its subcellular location is the postsynaptic density. The protein resides in the cell junction. It is found in the focal adhesion. The protein localises to the cell projection. It localises to the lamellipodium. Its subcellular location is the cytoskeleton. The protein resides in the microtubule organizing center. It is found in the centrosome. The protein localises to the spindle pole. In terms of biological role, GTPase-activating protein for ADP ribosylation factor family members, including ARF1. Multidomain scaffold protein that interacts with numerous proteins and therefore participates in many cellular functions, including receptor internalization, focal adhesion remodeling, and signaling by both G protein-coupled receptors and tyrosine kinase receptors. Through PAK1 activation, positively regulates microtubule nucleation during interphase. Plays a role in the regulation of cytokinesis; for this function, may act in a pathway also involving ENTR1 and PTPN13. May promote cell motility both by regulating focal complex dynamics and by the activation of RAC1. May act as scaffold for MAPK1/3 signal transduction, recruiting MAPK1/3 to focal adhesions after EGF stimulation via a Src-dependent pathway, hence stimulating cell migration. Plays a role in brain development and function. Involved in the regulation of spine density and synaptic plasticity that is required for processes involved in learning. Plays an important role in dendritic spine morphogenesis and synapse formation. In hippocampal neurons, recruits guanine nucleotide exchange factors (GEFs), such as ARHGEF7/beta-PIX, to the synaptic membrane. These in turn locally activate RAC1, which is an essential step for spine morphogenesis and synapse formation. May contribute to the organization of presynaptic active zones through oligomerization and formation of a Piccolo/PCLO-based protein network, which includes ARHGEF7/beta-PIX and FAK1. In neurons, through its interaction with liprin-alpha family members, may be required for AMPA receptor (GRIA2/3) proper targeting to the cell membrane. In complex with GABA(A) receptors and ARHGEF7, plays a crucial role in regulating GABA(A) receptor synaptic stability, maintaining GPHN/gephyrin scaffolds and hence GABAergic inhibitory synaptic transmission, by locally coordinating RAC1 and PAK1 downstream effector activity, leading to F-actin stabilization. May also be important for RAC1 downstream signaling pathway through PAK3 and regulation of neuronal inhibitory transmission at presynaptic input. Required for successful bone regeneration during fracture healing. The function in intramembranous ossification may, at least partly, exerted by macrophages in which GIT1 is a key negative regulator of redox homeostasis, IL1B production, and glycolysis, acting through the ERK1/2/NRF2/NFE2L2 axis. May play a role in angiogenesis during fracture healing. In this process, may regulate activation of the canonical NF-kappa-B signal in bone mesenchymal stem cells by enhancing the interaction between NEMO and 'Lys-63'-ubiquitinated RIPK1/RIP1, eventually leading to enhanced production of VEGFA and others angiogenic factors. Essential for VEGF signaling through the activation of phospholipase C-gamma and ERK1/2, hence may control endothelial cell proliferation and angiogenesis. The sequence is that of ARF GTPase-activating protein GIT1 (Git1) from Mus musculus (Mouse).